Reading from the N-terminus, the 491-residue chain is Cytochrome P450 2C40 (491 aa).

A signal peptide spans 1-25; that stretch reads MDPFVVLVLCLSFLLVLSLWRQRSA. Position 435 (Cys-435) interacts with heme.

This sequence belongs to the cytochrome P450 family. Heme is required as a cofactor. As to expression, liver, brain, kidney, and intestine, with trace amounts in lung and heart. Expressed throughout the intestinal tract, with higher expression levels in jejunum, cecum and colon.

Its subcellular location is the endoplasmic reticulum membrane. The protein resides in the microsome membrane. The enzyme catalyses (5Z,8Z,11Z,14Z)-eicosatetraenoate + reduced [NADPH--hemoprotein reductase] + O2 = 16(R)-hydroxy-(5Z,8Z,11Z,14Z)-eicosatetraenoate + oxidized [NADPH--hemoprotein reductase] + H2O + H(+). The catalysed reaction is (5Z,8Z,11Z,14Z)-eicosatetraenoate + reduced [NADPH--hemoprotein reductase] + O2 = 16(S)-hydroxy-(5Z,8Z,11Z,14Z)-eicosatetraenoate + oxidized [NADPH--hemoprotein reductase] + H2O + H(+). It catalyses the reaction (5Z,8Z,11Z,14Z)-eicosatetraenoate + reduced [NADPH--hemoprotein reductase] + O2 = (14R,15S)-epoxy-(5Z,8Z,11Z)-eicosatrienoate + oxidized [NADPH--hemoprotein reductase] + H2O + H(+). It carries out the reaction (5Z,8Z,11Z,14Z)-eicosatetraenoate + reduced [NADPH--hemoprotein reductase] + O2 = (14S,15R)-epoxy-(5Z,8Z,11Z)-eicosatrienoate + oxidized [NADPH--hemoprotein reductase] + H2O + H(+). It functions in the pathway lipid metabolism; arachidonate metabolism. Its function is as follows. A cytochrome P450 monooxygenase that may play a major role in the metabolism of arachidonic acid in the intestinal tract. Exhibits regioselective hydroxylase and epoxidase activity toward arachidonic acid, producing 16(R)-hydroxyeicosatetraenoic acid (HETE) and (14R,15S)-epoxyeicosatrienoic acid (EpETrE) as major products. Mechanistically, uses molecular oxygen inserting one oxygen atom into a substrate, and reducing the second into a water molecule, with two electrons provided by NADPH via cytochrome P450 reductase (CPR; NADPH-ferrihemoprotein reductase). This Mus musculus (Mouse) protein is Cytochrome P450 2C40.